Reading from the N-terminus, the 722-residue chain is Solute carrier organic anion transporter family member 4C1 (722 aa).

The segment at 1–81 (MQGSKGIENP…PGSQLSELEE (81 aa)) is disordered. The Cytoplasmic portion of the chain corresponds to 1-101 (MQGSKGIENP…QCLQRCNTPQ (101 aa)). 2 positions are modified to phosphoserine: S15 and S16. At T19 the chain carries Phosphothreonine. S24, S26, and S28 each carry phosphoserine. Residues 25–46 (ASPSQVEVSAVASRNQNGGSQP) are compositionally biased toward polar residues. A helical membrane pass occupies residues 102 to 122 (GFLLHYCLLALTQGIVVNGLV). Residues 123-141 (NISISTIEKRYEMKSSLTG) lie on the Extracellular side of the membrane. The helical transmembrane segment at 142–162 (LISSSYDISFCVLSLFVSFFG) threads the bilayer. The Cytoplasmic portion of the chain corresponds to 163 to 168 (ERGHKP). The helical transmembrane segment at 169-193 (RWLAFASFMIGLGALVFSLPHFFSG) threads the bilayer. Topologically, residues 194–218 (RYELGSIFEDTCLTRNSTRCSSSTS) are extracellular. A helical transmembrane segment spans residues 219 to 249 (LLSNYFYVFVLGQLLLGTGGTPLYTLGTAFI). At 250–269 (DDSVPTHKSSLYIGIGYSMS) the chain is on the cytoplasmic side. A helical membrane pass occupies residues 270–290 (ILGPAIGYVLGGQLLTMYIDI). The Extracellular portion of the chain corresponds to 291 to 306 (AMGQSSDLTEDDPRWL). The chain crosses the membrane as a helical span at residues 307–331 (GAWWIGFLLAWLFAWSLIMPFSCFP). The Cytoplasmic portion of the chain corresponds to 332-376 (KHLPGTAKIQAGKTSQTHQNNSTSFQHTDENFGKSIKDFPTAVKN). Residues 377–398 (LMRNTVFICLVLSTTSEALITT) form a helical membrane-spanning segment. The Extracellular portion of the chain corresponds to 399–418 (GFATFLPKFIENQFGLTSSF). Residues 419–442 (AATLGGAVLIPGAALGQILGGVLV) form a helical membrane-spanning segment. The Cytoplasmic segment spans residues 443-446 (SKFK). Residues 447 to 470 (MKCKNTMKFALCTSGVALVLSFVF) traverse the membrane as a helical segment. Residues 471 to 578 (IYAKCENEPF…RTRCSNLPIF (108 aa)) lie on the Extracellular side of the membrane. A Kazal-like domain is found at 494 to 549 (GNLTAPCNANCNCLRSYYYPLCGSDGIQYFSPCFAGCLNSVSNRKPKVYYNCSCIE). Cystine bridges form between C500–C530, C506–C526, and C515–C547. A helical membrane pass occupies residues 579–601 (LGIFFITVIFTFMAGTPITVSIL). Topologically, residues 602–610 (RCVNHRHRS) are cytoplasmic. Residues 611–636 (LALGVQFMLLRLLGTIPGPIIFGVII) traverse the membrane as a helical segment. Residues 637 to 670 (DSTCVLWDVNECGIKGACWIYDNIKMAHMLVAIS) lie on the Extracellular side of the membrane. A helical membrane pass occupies residues 671–688 (VTCKVITIFFNGLAIVLY). Residues 689 to 722 (KPPPPGTEVSFQSQNVIVSTISVEEDLDKAENEG) are Cytoplasmic-facing.

Belongs to the organo anion transporter (TC 2.A.60) family. In terms of tissue distribution, strongly expressed in initial segment of epididymis and seminal vesicles.

The protein resides in the basolateral cell membrane. The catalysed reaction is estrone 3-sulfate(out) = estrone 3-sulfate(in). The enzyme catalyses L-thyroxine(out) = L-thyroxine(in). It carries out the reaction 3,3',5-triiodo-L-thyronine(out) = 3,3',5-triiodo-L-thyronine(in). It catalyses the reaction chenodeoxycholate(out) = chenodeoxycholate(in). The catalysed reaction is glycocholate(out) = glycocholate(in). The enzyme catalyses L-homoarginine(in) = L-homoarginine(out). It carries out the reaction L-arginine(in) = L-arginine(out). It catalyses the reaction N(omega),N(omega)-dimethyl-L-arginine(out) = N(omega),N(omega)-dimethyl-L-arginine(in). Functionally, mediates the transport of organic anions such as steroids (estrone 3-sulfate, chenodeoxycholate, glycocholate) and thyroid hormones (3,3',5-triiodo-L-thyronine (T3), L-thyroxine (T4)), in the kidney. Capable of transporting cAMP and pharmacological substances such as digoxin, ouabain and methotrexate. Transport is independent of sodium, chloride ion, and ATP. Transport activity is stimulated by an acidic extracellular environment due to increased substrate affinity to the transporter. The driving force for this transport activity is currently not known. The role of hydrogencarbonate (HCO3(-), bicarbonate) as the probable counteranion that exchanges for organic anions is still not well defined. Functions as an uptake transporter at the apical membrane, suggesting a role in renal reabsorption. Involved in the renal secretion of the uremic toxin ADMA (N(omega),N(omega)-dimethyl-L-arginine or asymmetrical dimethylarginine), which is associated to cardiovascular events and mortality, and the structurally related amino acids L-arginine and L-homoarginine (a cardioprotective biomarker). Can act bidirectionally, suggesting a dual protective role of this transport protein; exporting L-homoarginine after being synthesized in proximal tubule cells, and mediating uptake of ADMA from the blood into proximal tubule cells where it is degraded by the enzyme dimethylarginine dimethylaminohydrolase 1 (DDAH1). May be involved in sperm maturation by enabling directed movement of organic anions and compounds within or between cells. This ion-transporting process is important to maintain the strict epididymal homeostasis necessary for sperm maturation. May have a role in secretory functions since seminal vesicle epithelial cells are assumed to secrete proteins involved in decapacitation by modifying surface proteins to facilitate the acquisition of the ability to fertilize the egg. The protein is Solute carrier organic anion transporter family member 4C1 of Mus musculus (Mouse).